A 201-amino-acid chain; its full sequence is Recombination protein RecR (201 aa).

A C4-type zinc finger spans residues 60–75; the sequence is CSCCGNVDTIDPCTVC. Residues 83–178 enclose the Toprim domain; the sequence is SVIIVVEDVS…KITRLAHGVP (96 aa).

This sequence belongs to the RecR family.

May play a role in DNA repair. It seems to be involved in an RecBC-independent recombinational process of DNA repair. It may act with RecF and RecO. The sequence is that of Recombination protein RecR from Agrobacterium fabrum (strain C58 / ATCC 33970) (Agrobacterium tumefaciens (strain C58)).